Here is a 177-residue protein sequence, read N- to C-terminus: Large ribosomal subunit protein uL6 (177 aa).

Over residues 157–171 (YKGKGVRYSDENVRR) the composition is skewed to basic and acidic residues. A disordered region spans residues 157–177 (YKGKGVRYSDENVRRKEAKKK).

Belongs to the universal ribosomal protein uL6 family. In terms of assembly, part of the 50S ribosomal subunit.

In terms of biological role, this protein binds to the 23S rRNA, and is important in its secondary structure. It is located near the subunit interface in the base of the L7/L12 stalk, and near the tRNA binding site of the peptidyltransferase center. The protein is Large ribosomal subunit protein uL6 of Pseudoalteromonas translucida (strain TAC 125).